Consider the following 106-residue polypeptide: Nucleoid-associated protein Exig_0019 (106 aa).

The segment covering 1 to 16 has biased composition (low complexity); the sequence is MRGMGNMNNMMKQMQK. The interval 1-23 is disordered; sequence MRGMGNMNNMMKQMQKMQKDMAK.

The protein belongs to the YbaB/EbfC family. As to quaternary structure, homodimer.

It is found in the cytoplasm. It localises to the nucleoid. Its function is as follows. Binds to DNA and alters its conformation. May be involved in regulation of gene expression, nucleoid organization and DNA protection. The polypeptide is Nucleoid-associated protein Exig_0019 (Exiguobacterium sibiricum (strain DSM 17290 / CCUG 55495 / CIP 109462 / JCM 13490 / 255-15)).